The primary structure comprises 656 residues: Macrolide export ATP-binding/permease protein MacB (656 aa).

The region spanning 20–258 (IELAGITRSF…EPDFAPHVDR (239 aa)) is the ABC transporter domain. Residue 56 to 63 (GASGSGKS) participates in ATP binding. 4 helical membrane-spanning segments follow: residues 284-304 (ALTL…LAIG), 531-551 (LTIL…IGVM), 591-611 (ALGG…IALF), and 619-639 (LLPV…FGYL).

It belongs to the ABC transporter superfamily. Macrolide exporter (TC 3.A.1.122) family. In terms of assembly, homodimer.

It localises to the cell inner membrane. Functionally, non-canonical ABC transporter that contains transmembrane domains (TMD), which form a pore in the inner membrane, and an ATP-binding domain (NBD), which is responsible for energy generation. Confers resistance against macrolides. This Azoarcus sp. (strain BH72) protein is Macrolide export ATP-binding/permease protein MacB.